The primary structure comprises 161 residues: Anaerobic nitrite reductase Glb1-1 (161 aa).

The Globin domain occupies 8 to 157; it reads CFTEEQEALV…LVGAIKSEMK (150 aa). The short motif at 41–45 is the Homodimerization element; sequence EIAPS. Heme b is bound by residues serine 51, lysine 65, histidine 69, lysine 99, threonine 103, and histidine 104. The short motif at 111–123 is the Homodimerization element; sequence NEHFEVTKFALLD.

It belongs to the plant globin family. As to quaternary structure, homodimer. Heme b is required as a cofactor. As to expression, mainly expressed in root nodules, and, to a lower extent, in leaves, roots, stems, flowers and fruits. Accumulates in mature root nodules.

It carries out the reaction Fe(III)-heme b-[protein] + nitric oxide + H2O = Fe(II)-heme b-[protein] + nitrite + 2 H(+). Its function is as follows. Phytoglobin that reduces nitrite to nitric oxide (NO) under anoxic conditions (e.g. during flooding or in waterlogged soil) and upon root nodulation. Required for general plant development and during nodulation, especially for the onset of symbiosis. Monitors nitric oxide (NO) levels during early phase of the nitrogen-fixing symbiosis and buffers oxygen in functioning nodules. May not function as an oxygen storage or transport protein. Has an unusually high affinity for O(2) through a hexacoordinate heme iron because of a very low dissociation constant. This Lotus japonicus (Lotus corniculatus var. japonicus) protein is Anaerobic nitrite reductase Glb1-1.